A 72-amino-acid polypeptide reads, in one-letter code: ATP synthase subunit c (72 aa).

2 helical membrane-spanning segments follow: residues 5–25 and 52–72; these read LLAAGIAVLAGIGAGIGIGIA and GLSEATAIYGLVISIILLFVV.

Belongs to the ATPase C chain family. As to quaternary structure, F-type ATPases have 2 components, F(1) - the catalytic core - and F(0) - the membrane proton channel. F(1) has five subunits: alpha(3), beta(3), gamma(1), delta(1), epsilon(1). F(0) has three main subunits: a(1), b(2) and c(10-14). The alpha and beta chains form an alternating ring which encloses part of the gamma chain. F(1) is attached to F(0) by a central stalk formed by the gamma and epsilon chains, while a peripheral stalk is formed by the delta and b chains.

Its subcellular location is the cell membrane. Its function is as follows. F(1)F(0) ATP synthase produces ATP from ADP in the presence of a proton or sodium gradient. F-type ATPases consist of two structural domains, F(1) containing the extramembraneous catalytic core and F(0) containing the membrane proton channel, linked together by a central stalk and a peripheral stalk. During catalysis, ATP synthesis in the catalytic domain of F(1) is coupled via a rotary mechanism of the central stalk subunits to proton translocation. Functionally, key component of the F(0) channel; it plays a direct role in translocation across the membrane. A homomeric c-ring of between 10-14 subunits forms the central stalk rotor element with the F(1) delta and epsilon subunits. The polypeptide is ATP synthase subunit c (Clostridium perfringens (strain SM101 / Type A)).